A 260-amino-acid chain; its full sequence is Cell division protein FtsQ (260 aa).

At 1-26 (MINKVLLEGQRITRSPQVKQHACGAS) the chain is on the cytoplasmic side. Residues 27-47 (FFLVVLLLIGGLLYSTISWMW) form a helical membrane-spanning segment. Residues 48 to 260 (DEQRLPLSKL…QELTQEKNDD (213 aa)) lie on the Periplasmic side of the membrane. The 71-residue stretch at 52–122 (LPLSKLVLQG…DTIKVYLTEY (71 aa)) folds into the POTRA domain.

This sequence belongs to the FtsQ/DivIB family. FtsQ subfamily. As to quaternary structure, part of a complex composed of FtsB, FtsL and FtsQ.

It is found in the cell inner membrane. Its function is as follows. Essential cell division protein. May link together the upstream cell division proteins, which are predominantly cytoplasmic, with the downstream cell division proteins, which are predominantly periplasmic. May control correct divisome assembly. The polypeptide is Cell division protein FtsQ (Vibrio cholerae serotype O1 (strain ATCC 39315 / El Tor Inaba N16961)).